The primary structure comprises 298 residues: GTP cyclohydrolase FolE2 (298 aa).

The protein belongs to the GTP cyclohydrolase IV family.

It catalyses the reaction GTP + H2O = 7,8-dihydroneopterin 3'-triphosphate + formate + H(+). It participates in cofactor biosynthesis; 7,8-dihydroneopterin triphosphate biosynthesis; 7,8-dihydroneopterin triphosphate from GTP: step 1/1. Its function is as follows. Converts GTP to 7,8-dihydroneopterin triphosphate. In Neisseria meningitidis serogroup A / serotype 4A (strain DSM 15465 / Z2491), this protein is GTP cyclohydrolase FolE2.